A 375-amino-acid chain; its full sequence is Cinnamyl alcohol dehydrogenase 3 (375 aa).

Cys44 contacts Zn(2+). Ser46 is a binding site for NADP(+). Zn(2+) contacts are provided by His66, Glu67, Cys97, Cys100, Cys103, Cys111, and Cys160. NADP(+)-binding positions include Thr164, 186–191, 209–214, Thr249, Gly273, and 296–298; these read GLGGLG, SRSSEK, and SQI.

Belongs to the zinc-containing alcohol dehydrogenase family. In terms of assembly, homodimer. Zn(2+) is required as a cofactor. Expressed in the root tips. Expressed in the apical meristematic regions, leaf veins and at the base of the trichomes. Expressed at the base of the stems. Expressed in the abscission zones of newly formed siliques.

It catalyses the reaction (E)-cinnamyl alcohol + NADP(+) = (E)-cinnamaldehyde + NADPH + H(+). The catalysed reaction is (E)-coniferol + NADP(+) = (E)-coniferaldehyde + NADPH + H(+). The enzyme catalyses (E)-sinapyl alcohol + NADP(+) = (E)-sinapaldehyde + NADPH + H(+). It carries out the reaction (E)-4-coumaroyl alcohol + NADP(+) = (E)-4-coumaraldehyde + NADPH + H(+). It catalyses the reaction (E)-caffeyl alcohol + NADP(+) = (E)-caffeyl aldehyde + NADPH + H(+). It participates in aromatic compound metabolism; phenylpropanoid biosynthesis. Functionally, involved in lignin biosynthesis. Catalyzes the final step specific for the production of lignin monomers. Catalyzes the NADPH-dependent reduction of coniferaldehyde, 5-hydroxyconiferaldehyde, sinapaldehyde, 4-coumaraldehyde and caffeyl aldehyde to their respective alcohols. The chain is Cinnamyl alcohol dehydrogenase 3 from Arabidopsis thaliana (Mouse-ear cress).